Here is a 499-residue protein sequence, read N- to C-terminus: Glucose-6-phosphate exchanger SLC37A2 (499 aa).

A helical transmembrane segment spans residues 21-40 (YRGFIIVMTFLFYTCYHLSR). Residues N53, N62, and N66 are each glycosylated (N-linked (GlcNAc...) asparagine). 11 helical membrane passes run 86–106 (GSLD…SGIF), 116–136 (LSGG…GYYW), 143–163 (YYIL…PAVV), 187–207 (AVGN…AWGL), 208–228 (SFIV…FFLV), 302–322 (LCLL…PLYI), 334–354 (GDLS…AGGI), 362–382 (AITC…YNYF), 391–411 (IAML…ITTA), 434–454 (AIID…AGVL), and 458–478 (GWNY…LLLA).

This sequence belongs to the major facilitator superfamily. Organophosphate:Pi antiporter (OPA) (TC 2.A.1.4) family.

It localises to the endoplasmic reticulum membrane. The catalysed reaction is D-glucose 6-phosphate(in) + phosphate(out) = D-glucose 6-phosphate(out) + phosphate(in). Functionally, inorganic phosphate and glucose-6-phosphate antiporter. May transport cytoplasmic glucose-6-phosphate into the lumen of the endoplasmic reticulum and translocate inorganic phosphate into the opposite direction. This Xenopus laevis (African clawed frog) protein is Glucose-6-phosphate exchanger SLC37A2.